A 353-amino-acid chain; its full sequence is Photosystem II protein D1 (353 aa).

The residue at position 2 (T2) is an N-acetylthreonine. A Phosphothreonine modification is found at T2. Transmembrane regions (helical) follow at residues 29–46 (YIGWFGVLMIPTLLTATS), 118–133 (HFLLGVACYMGREWEL), and 142–156 (WIAVAYSAPVAAATA). H118 contacts chlorophyll a. Pheophytin a is bound at residue Y126. [CaMn4O5] cluster is bound by residues D170 and E189. Residues 197 to 218 (FHMLGVAGVFGGSLFSAMHGSL) form a helical membrane-spanning segment. A chlorophyll a-binding site is contributed by H198. A quinone is bound by residues H215 and 264–265 (SF). Fe cation is bound at residue H215. H272 lines the Fe cation pocket. The chain crosses the membrane as a helical span at residues 274–288 (FLAAWPVAGIWFTAL). H332, E333, D342, and A344 together coordinate [CaMn4O5] cluster. Positions 345 to 353 (AVESISIGG) are excised as a propeptide.

It belongs to the reaction center PufL/M/PsbA/D family. PSII is composed of 1 copy each of membrane proteins PsbA, PsbB, PsbC, PsbD, PsbE, PsbF, PsbH, PsbI, PsbJ, PsbK, PsbL, PsbM, PsbT, PsbX, PsbY, PsbZ, Psb30/Ycf12, at least 3 peripheral proteins of the oxygen-evolving complex and a large number of cofactors. It forms dimeric complexes. The D1/D2 heterodimer binds P680, chlorophylls that are the primary electron donor of PSII, and subsequent electron acceptors. It shares a non-heme iron and each subunit binds pheophytin, quinone, additional chlorophylls, carotenoids and lipids. D1 provides most of the ligands for the Mn4-Ca-O5 cluster of the oxygen-evolving complex (OEC). There is also a Cl(-1) ion associated with D1 and D2, which is required for oxygen evolution. The PSII complex binds additional chlorophylls, carotenoids and specific lipids. is required as a cofactor. Tyr-161 forms a radical intermediate that is referred to as redox-active TyrZ, YZ or Y-Z. In terms of processing, C-terminally processed by CTPA; processing is essential to allow assembly of the oxygen-evolving complex and thus photosynthetic growth.

It is found in the plastid. It localises to the chloroplast thylakoid membrane. The catalysed reaction is 2 a plastoquinone + 4 hnu + 2 H2O = 2 a plastoquinol + O2. Photosystem II (PSII) is a light-driven water:plastoquinone oxidoreductase that uses light energy to abstract electrons from H(2)O, generating O(2) and a proton gradient subsequently used for ATP formation. It consists of a core antenna complex that captures photons, and an electron transfer chain that converts photonic excitation into a charge separation. The D1/D2 (PsbA/PsbD) reaction center heterodimer binds P680, the primary electron donor of PSII as well as several subsequent electron acceptors. The protein is Photosystem II protein D1 of Pinus contorta (Shore pine).